The sequence spans 423 residues: Type II methyltransferase M.NgoBV (423 aa).

One can recognise an SAM-dependent MTase C5-type domain in the interval 4–423; the sequence is IKFIDLFSGM…AVSERLLHTL (420 aa). The active site involves cysteine 80.

The protein belongs to the class I-like SAM-binding methyltransferase superfamily. C5-methyltransferase family.

It catalyses the reaction a 2'-deoxycytidine in DNA + S-adenosyl-L-methionine = a 5-methyl-2'-deoxycytidine in DNA + S-adenosyl-L-homocysteine + H(+). Its function is as follows. A methylase, recognizes the double-stranded sequence 5'-GGNNCC-3', methylates C-5 on both strands, and protects the DNA from cleavage by the NgoBV endonuclease. This is Type II methyltransferase M.NgoBV (ngoBVM) from Neisseria gonorrhoeae.